A 320-amino-acid chain; its full sequence is Ribosome biogenesis protein BRX1 homolog 2 (320 aa).

The tract at residues 1–40 (MGRKRKHSETEAPAPVKKSDEPAPDRPKRTLLGWKDKSEG) is disordered. Residues 17–40 (KKSDEPAPDRPKRTLLGWKDKSEG) are compositionally biased toward basic and acidic residues. Residues 57-260 (EKVLVTCSRR…PIKIFAGSFG (204 aa)) form the Brix domain. The interval 297–320 (RKKMHELSNPLEPDEFADMWKDDE) is disordered. The segment covering 308-320 (EPDEFADMWKDDE) has biased composition (acidic residues).

Belongs to the BRX1 family. As to expression, expressed in roots, rosette leaves, stems, flowers, siliques and seeds.

Its subcellular location is the nucleus. It is found in the nucleolus. Involved in pre-rRNA processing and required for biogenesis of the large (60S) ribosomal subunit. Required for proper development. This Arabidopsis thaliana (Mouse-ear cress) protein is Ribosome biogenesis protein BRX1 homolog 2.